Consider the following 174-residue polypeptide: RNA pyrophosphohydrolase (174 aa).

The Nudix hydrolase domain maps to 6–149; the sequence is GFRANVGIII…KRDVYRKVMK (144 aa). Positions 38–59 match the Nudix box motif; the sequence is GGVDDGETAEEAMYRELYEEVG.

It belongs to the Nudix hydrolase family. RppH subfamily. Requires a divalent metal cation as cofactor.

Its function is as follows. Accelerates the degradation of transcripts by removing pyrophosphate from the 5'-end of triphosphorylated RNA, leading to a more labile monophosphorylated state that can stimulate subsequent ribonuclease cleavage. This chain is RNA pyrophosphohydrolase, found in Shewanella baltica (strain OS223).